The sequence spans 110 residues: Large ribosomal subunit protein uL22 (110 aa).

Belongs to the universal ribosomal protein uL22 family. In terms of assembly, part of the 50S ribosomal subunit.

In terms of biological role, this protein binds specifically to 23S rRNA; its binding is stimulated by other ribosomal proteins, e.g. L4, L17, and L20. It is important during the early stages of 50S assembly. It makes multiple contacts with different domains of the 23S rRNA in the assembled 50S subunit and ribosome. Functionally, the globular domain of the protein is located near the polypeptide exit tunnel on the outside of the subunit, while an extended beta-hairpin is found that lines the wall of the exit tunnel in the center of the 70S ribosome. The polypeptide is Large ribosomal subunit protein uL22 (Alkaliphilus metalliredigens (strain QYMF)).